We begin with the raw amino-acid sequence, 205 residues long: Probable GTP-binding protein EngB (205 aa).

Residues 27-201 (QGMEVAFAGR…QNKLNAWFSG (175 aa)) form the EngB-type G domain. Residues 35–42 (GRSNAGKS), 62–66 (GRTQL), 80–83 (DLPG), 147–150 (TKVD), and 180–182 (FSS) each bind GTP. 2 residues coordinate Mg(2+): Ser42 and Thr64.

This sequence belongs to the TRAFAC class TrmE-Era-EngA-EngB-Septin-like GTPase superfamily. EngB GTPase family. Mg(2+) is required as a cofactor.

In terms of biological role, necessary for normal cell division and for the maintenance of normal septation. This Hamiltonella defensa subsp. Acyrthosiphon pisum (strain 5AT) protein is Probable GTP-binding protein EngB.